The primary structure comprises 223 residues: Small ribosomal subunit protein uS3 (223 aa).

Residues 38–106 (IKKYLKSKLA…EVHLNIVEIR (69 aa)) enclose the KH type-2 domain.

The protein belongs to the universal ribosomal protein uS3 family. Part of the 30S ribosomal subunit. Forms a tight complex with proteins S10 and S14.

Functionally, binds the lower part of the 30S subunit head. Binds mRNA in the 70S ribosome, positioning it for translation. In Rhodospirillum rubrum (strain ATCC 11170 / ATH 1.1.1 / DSM 467 / LMG 4362 / NCIMB 8255 / S1), this protein is Small ribosomal subunit protein uS3.